Here is a 7158-residue protein sequence, read N- to C-terminus: Twitchin (7158 aa).

Ig-like domains follow at residues proline 5–asparagine 97 and proline 111–asparagine 204. Intrachain disulfides connect cysteine 25–cysteine 81 and cysteine 132–cysteine 188. 4 disordered regions span residues asparagine 204–leucine 381, glutamate 473–arginine 639, lysine 658–alanine 732, and glutamate 763–arginine 955. A compositionally biased stretch (low complexity) spans threonine 220–lysine 238. Basic and acidic residues-rich tracts occupy residues lysine 242–proline 259 and glutamate 279–valine 291. Low complexity-rich tracts occupy residues serine 319–serine 340 and serine 347–aspartate 368. One can recognise an Ig-like 3 domain in the interval proline 377–lysine 466. Basic residues predominate over residues arginine 504–serine 513. Positions lysine 514–serine 523 are enriched in low complexity. 2 stretches are compositionally biased toward basic and acidic residues: residues glycine 529–arginine 540 and lysine 601–leucine 618. Positions lysine 620–serine 630 are enriched in low complexity. Residues valine 718 to valine 764 form a Kelch 1 repeat. Basic and acidic residues-rich tracts occupy residues glutamate 763–lysine 813, lysine 837–alanine 850, lysine 885–lysine 897, and serine 917–arginine 955. Positions proline 980 to threonine 1072 constitute an Ig-like 4 domain. The interval serine 1088 to glutamine 1118 is disordered. A compositionally biased stretch (basic and acidic residues) spans glycine 1106–glutamine 1118. Ig-like domains lie at proline 1122–threonine 1213, proline 1217–glutamine 1306, and proline 1312–isoleucine 1398. Cysteines 1150 and 1201 form a disulfide. 8 consecutive Fibronectin type-III domains span residues proline 1598–proline 1690, lysine 1696–lysine 1791, proline 1891–proline 1988, lysine 1994–lysine 2087, proline 2189–proline 2282, lysine 2288–arginine 2383, proline 2483–proline 2576, and valine 2579–arginine 2675. Residues proline 2014–lysine 2058 form a Kelch 2 repeat. Positions proline 2086–threonine 2181 constitute an Ig-like 8 domain. The stretch at tryptophan 2207–glutamine 2253 is one Kelch 3 repeat. Basic and acidic residues predominate over residues glycine 2266 to glycine 2287. The segment at glycine 2266–valine 2295 is disordered. The stretch at lysine 2502–histidine 2547 is one Kelch 4 repeat. Residues proline 2679–threonine 2763 enclose the Ig-like 9 domain. 2 Fibronectin type-III domains span residues proline 2775–proline 2868 and arginine 2874–arginine 2968. The stretch at tryptophan 2793 to aspartate 2839 is one Kelch 5 repeat. A disordered region spans residues asparagine 2849 to alanine 2901. The span at proline 2868–tryptophan 2892 shows a compositional bias: basic and acidic residues. One can recognise an Ig-like 10 domain in the interval proline 2972–asparagine 3062. Fibronectin type-III domains are found at residues proline 3070 to proline 3165 and lysine 3171 to arginine 3265. The Kelch 6 repeat unit spans residues arginine 3089–proline 3134. Residues proline 3268 to threonine 3358 form the Ig-like 11 domain. Fibronectin type-III domains follow at residues serine 3365 to proline 3459 and lysine 3465 to arginine 3559. Residues tryptophan 3384–histidine 3430 form a Kelch 7 repeat. Residues proline 3563–asparagine 3653 form the Ig-like 12 domain. 6 Fibronectin type-III domains span residues proline 3661–proline 3753, alanine 3759–arginine 3853, proline 3954–glutamine 4047, proline 4053–arginine 4146, proline 4246–proline 4340, and lysine 4346–proline 4440. The stretch at tryptophan 3972–lysine 4018 is one Kelch 8 repeat. 2 Kelch repeats span residues lysine 4265–glycine 4310 and aspartate 4365–lysine 4410. Residues proline 4445–threonine 4531 form the Ig-like 13 domain. 8 consecutive Fibronectin type-III domains span residues alanine 4538–proline 4631, alanine 4637–tyrosine 4733, alanine 4739–glutamine 4834, proline 4936–proline 5028, alanine 5034–alanine 5129, serine 5231–tyrosine 5326, glutamine 5333–arginine 5427, and proline 5430–serine 5528. A Kelch 11 repeat occupies aspartate 4557–glycine 4602. The stretch at leucine 5287–glutamate 5335 is one Kelch 12 repeat. The region spanning proline 5533–valine 5621 is the Ig-like 14 domain. 2 consecutive Fibronectin type-III domains span residues proline 5723 to proline 5817 and serine 5823 to serine 5919. The stretch at arginine 5742–asparagine 5787 is one Kelch 13 repeat. Ig-like domains are found at residues proline 5923–arginine 6011 and proline 6016–threonine 6107. Cysteine 5944 and cysteine 5995 are oxidised to a cystine. Residues proline 6114–aspartate 6207 form the Fibronectin type-III 31 domain. In terms of domain architecture, Protein kinase spans tyrosine 6261–leucine 6516. ATP-binding positions include leucine 6267–valine 6275 and lysine 6290. The active-site Proton acceptor is the aspartate 6382. Residues threonine 6517–serine 6581 form a C-terminal regulatory domain (CDR) region. 5 consecutive Ig-like domains span residues proline 6585–asparagine 6673, proline 6696–threonine 6795, proline 6863–threonine 6952, proline 6958–valine 7059, and proline 7067–alanine 7149.

Belongs to the protein kinase superfamily. CAMK Ser/Thr protein kinase family. As to quaternary structure, may interact (via protein kinase and CRD domains) with mak-1 (via protein kinase domain). Mg(2+) serves as cofactor. Phosphorylated by mak-1 on the protein kinase domain and/or CDR domain in vitro. In terms of tissue distribution, expressed in body wall, anal, vulval, and pharyngeal muscles (at protein level).

The protein localises to the cytoplasm. The protein resides in the myofibril. It is found in the sarcomere. It localises to the a band. The enzyme catalyses L-seryl-[protein] + ATP = O-phospho-L-seryl-[protein] + ADP + H(+). It carries out the reaction L-threonyl-[protein] + ATP = O-phospho-L-threonyl-[protein] + ADP + H(+). Its activity is regulated as follows. Forces generated by the contraction/relaxation cycles of muscle activity separate the regulatory domain from the catalytic core, activating the enzyme. At rest, the kinase domain is in a closed conformation. The active site is occupied by the autoinhibitory region (CDR), which makes extensive contact with the catalytic site, blocking substrate binding. At low forces the regulatory tail will unravel reversibly and expose the active site to its substrates, potentially stabilized by binding of Ca/CALM. At high forces the kinase begins to unfold and the integrity of the active site is disrupted. In terms of biological role, regulator of muscle contraction and relaxation. Senses mechanical strain that occurs during muscle activity by unfolding in clearly resolvable steps at differing forces. Plays a role in the organization of sarcomeres in body wall muscles. The protein is Twitchin of Caenorhabditis elegans.